A 1036-amino-acid polypeptide reads, in one-letter code: MQYLNFPRMPNIMMFLEVAILCLWVVADASASSAKFGSTTPASAQQSDVELEPINGTLNYRLYAKKGRDDKPWFDGLDSRHIQCVRRARCYPTSNATNTCFGSKLPYELSSLDLTDFHTEKELNDKLNDYYALKHVPKCWAAIQPFLCAVFKPKCEKINGEDMVYLPSYEMCRITMEPCRILYNTTFFPKFLRCNETLFPTKCTNGARGMKFNGTGQCLSPLVPTDTSASYYPGIEGCGVRCKDPLYTDDEHRQIHKLIGWAGSICLLSNLFVVSTFFIDWKNANKYPAVIVFYINLCFLIACVGWLLQFTSGSREDIVCRKDGTLRHSEPTAGENLSCIVIFVLVYYFLTAGMVWFVFLTYAWHWRAMGHVQDRIDKKGSYFHLVAWSLPLVLTITTMAFSEVDGNSIVGICFVGYINHSMRAGLLLGPLCGVILIGGYFITRGMVMLFGLKHFANDIKSTSASNKIHLIIMRMGVCALLTLVFILVAIACHVTEFRHADEWAQSFRQFIICKISSVFEEKSSCRIENRPSVGVLQLHLLCLFSSGIVMSTWCWTPSSIETWKRYIRKKCGKEVVEEVKMPKHKVIAQTWAKRKDFEDKGRLSITLYNTHTDPVGLNFDVNDLNSSETNDISSTWAAYLPQCVKRRMALTGAATGNSSSHGPRKNSLDSEISVSVRHVSVESRRNSVDSQVSVKIAEMKTKVASRSRGKHGGSSSNRRTQRRRDYIAAATGKSSRRRESSTSVESQVIALKKTTYPNASHKVGVFAHHSSKKQHNYTSSMKRRTANAGLDPSILNEFLQKNGDFIFPFLQNQDMSSSSEEDNSRASQKIQDLNVVVKQQEISEDDHDGIKIEELPNSKQVALENFLKNIKKSNESNSNRHSRNSARSQSKKSQKRHLKNPAADLDFRKDCVKYRSNDSLSCSSEELDVALDVGSLLNSSFSGISMGKPHSRNSKTSCDVGIQANPFELVPSYGEDELQQAMRLLNAASRQRTEAANEDFGGTELQGLLGHSHRHQREPTFMSESDKLKMLLLPSK.

Positions 1–31 (MQYLNFPRMPNIMMFLEVAILCLWVVADASA) are cleaved as a signal peptide. Over 32–258 (SSAKFGSTTP…DDEHRQIHKL (227 aa)) the chain is Extracellular. Residues N55 and N95 are each glycosylated (N-linked (GlcNAc...) asparagine). An FZ domain is found at 85–206 (VRRARCYPTS…TLFPTKCTNG (122 aa)). Disulfide bonds link C90-C155, C100-C148, C139-C179, and C172-C194. Residues N184, N195, and N213 are each glycosylated (N-linked (GlcNAc...) asparagine). Intrachain disulfides connect C218-C238 and C242-C320. A helical transmembrane segment spans residues 259–279 (IGWAGSICLLSNLFVVSTFFI). At 280-287 (DWKNANKY) the chain is on the cytoplasmic side. Residues 288–308 (PAVIVFYINLCFLIACVGWLL) traverse the membrane as a helical segment. The Extracellular segment spans residues 309–339 (QFTSGSREDIVCRKDGTLRHSEPTAGENLSC). The N-linked (GlcNAc...) asparagine glycan is linked to N336. Residues C339 and C413 are joined by a disulfide bond. The helical transmembrane segment at 340 to 360 (IVIFVLVYYFLTAGMVWFVFL) threads the bilayer. Over 361 to 381 (TYAWHWRAMGHVQDRIDKKGS) the chain is Cytoplasmic. A helical membrane pass occupies residues 382-402 (YFHLVAWSLPLVLTITTMAFS). Topologically, residues 403–421 (EVDGNSIVGICFVGYINHS) are extracellular. An N-linked (GlcNAc...) asparagine glycan is attached at N419. Residues 422–442 (MRAGLLLGPLCGVILIGGYFI) form a helical membrane-spanning segment. Topologically, residues 443–469 (TRGMVMLFGLKHFANDIKSTSASNKIH) are cytoplasmic. Residues 470–490 (LIIMRMGVCALLTLVFILVAI) traverse the membrane as a helical segment. Topologically, residues 491–532 (ACHVTEFRHADEWAQSFRQFIICKISSVFEEKSSCRIENRPS) are extracellular. C513 and C525 form a disulfide bridge. The helical transmembrane segment at 533-553 (VGVLQLHLLCLFSSGIVMSTW) threads the bilayer. The Cytoplasmic portion of the chain corresponds to 554-1036 (CWTPSSIETW…KLKMLLLPSK (483 aa)). Phosphoserine occurs at positions 658, 659, 667, 670, 673, 687, 690, and 693. Disordered regions lie at residues 678–745 (HVSV…TSVE) and 870–902 (IKKSNESNSNRHSRNSARSQSKKSQKRHLKNPA). Over residues 880–899 (RHSRNSARSQSKKSQKRHLK) the composition is skewed to basic residues.

This sequence belongs to the G-protein coupled receptor Fz/Smo family. In terms of assembly, interacts with cos. Post-translationally, phosphorylation by CkIalpha and PKA regulates smo accumulation at the cell surface and its signaling activity in response to hh. As to expression, expressed in olfactory sensory neurons (at protein level).

The protein resides in the cell membrane. It is found in the cell projection. Its subcellular location is the cilium. In terms of biological role, segment polarity protein required for correct patterning of every segment. G protein-coupled receptor which associates with the patched protein (ptc) to transduce the hedgehog (hh) signal through the activation of an inhibitory G-protein. In the absence of hh, ptc represses the constitutive signaling activity of smo through fused (fu). Essential component of a hh-signaling pathway which regulates the Duox-dependent gut immune response to bacterial uracil; required to activate Cad99C-dependent endosome formation, norpA-dependent Ca2+ mobilization and p38 MAPK, which are essential steps in the Duox-dependent production of reactive oxygen species (ROS) in response to intestinal bacterial infection. The sequence is that of Protein smoothened (smo) from Drosophila melanogaster (Fruit fly).